Consider the following 262-residue polypeptide: Small ribosomal subunit protein uS2 (262 aa).

The interval Ala-236–Glu-262 is disordered.

This sequence belongs to the universal ribosomal protein uS2 family.

In Psychrobacter sp. (strain PRwf-1), this protein is Small ribosomal subunit protein uS2.